Consider the following 436-residue polypeptide: Putative actin-fragmin kinase DDB_G0268748 (436 aa).

The segment at 14–58 is disordered; the sequence is DKNIDSGSSSSNIGGSSSNSSGTTNKRSSGNFNGSSASSSPSSST. Over residues 18 to 57 the composition is skewed to low complexity; sequence DSGSSSSNIGGSSSNSSGTTNKRSSGNFNGSSASSSPSSS.

This sequence belongs to the protein kinase superfamily. AFK Ser/Thr protein kinase family.

This is Putative actin-fragmin kinase DDB_G0268748 from Dictyostelium discoideum (Social amoeba).